A 103-amino-acid polypeptide reads, in one-letter code: Large ribosomal subunit protein bL21 (103 aa).

The protein belongs to the bacterial ribosomal protein bL21 family. Part of the 50S ribosomal subunit. Contacts protein L20.

In terms of biological role, this protein binds to 23S rRNA in the presence of protein L20. This chain is Large ribosomal subunit protein bL21, found in Sodalis glossinidius (strain morsitans).